The sequence spans 547 residues: Chaperonin GroEL (547 aa).

ATP-binding positions include 30–33 (TLGP), lysine 51, 87–91 (DGTTT), glycine 414, 478–480 (NAA), and aspartate 494.

This sequence belongs to the chaperonin (HSP60) family. As to quaternary structure, forms a cylinder of 14 subunits composed of two heptameric rings stacked back-to-back. Interacts with the co-chaperonin GroES.

The protein localises to the cytoplasm. It catalyses the reaction ATP + H2O + a folded polypeptide = ADP + phosphate + an unfolded polypeptide.. Its function is as follows. Together with its co-chaperonin GroES, plays an essential role in assisting protein folding. The GroEL-GroES system forms a nano-cage that allows encapsulation of the non-native substrate proteins and provides a physical environment optimized to promote and accelerate protein folding. The sequence is that of Chaperonin GroEL from Klebsiella pneumoniae.